The following is a 70-amino-acid chain: MTLIKSITSINFKKSNSNSPSMINLNSNYYNNNNNKFQFDNTISEGFDILISNRSPQLRWWIRWWDSYSQ.

This is an uncharacterized protein from Dictyostelium discoideum (Social amoeba).